A 141-amino-acid polypeptide reads, in one-letter code: Small ribosomal subunit protein bS16 (141 aa).

Residues 84–141 (TRKARSNPEKSKPKAKAQERLEAARMAEEEAAAAAKAAAEAPAEEAPAAEAPAEEAQA) form a disordered region. The segment covering 89 to 111 (SNPEKSKPKAKAQERLEAARMAE) has biased composition (basic and acidic residues). The segment covering 115–141 (AAAAKAAAEAPAEEAPAAEAPAEEAQA) has biased composition (low complexity).

Belongs to the bacterial ribosomal protein bS16 family.

The protein is Small ribosomal subunit protein bS16 of Parvibaculum lavamentivorans (strain DS-1 / DSM 13023 / NCIMB 13966).